The primary structure comprises 188 residues: Elongation factor P-like protein (188 aa).

Belongs to the elongation factor P family.

The protein is Elongation factor P-like protein of Alcanivorax borkumensis (strain ATCC 700651 / DSM 11573 / NCIMB 13689 / SK2).